The sequence spans 360 residues: Phospho-N-acetylmuramoyl-pentapeptide-transferase (360 aa).

The next 10 helical transmembrane spans lie at 25 to 45 (RTIY…PWLI), 73 to 93 (TMGG…WADL), 94 to 114 (TNAY…IGFV), 134 to 154 (FCLQ…GLNG), 173 to 193 (PGYV…VNLT), 198 to 218 (GLAI…AYVA), 240 to 260 (VFCG…AYPA), 262 to 282 (IFMG…VAIL), 287 to 307 (LALV…ILQV), and 337 to 357 (KVIV…VSTL).

It belongs to the glycosyltransferase 4 family. MraY subfamily. Requires Mg(2+) as cofactor.

The protein resides in the cell inner membrane. It carries out the reaction UDP-N-acetyl-alpha-D-muramoyl-L-alanyl-gamma-D-glutamyl-meso-2,6-diaminopimeloyl-D-alanyl-D-alanine + di-trans,octa-cis-undecaprenyl phosphate = di-trans,octa-cis-undecaprenyl diphospho-N-acetyl-alpha-D-muramoyl-L-alanyl-D-glutamyl-meso-2,6-diaminopimeloyl-D-alanyl-D-alanine + UMP. Its pathway is cell wall biogenesis; peptidoglycan biosynthesis. Catalyzes the initial step of the lipid cycle reactions in the biosynthesis of the cell wall peptidoglycan: transfers peptidoglycan precursor phospho-MurNAc-pentapeptide from UDP-MurNAc-pentapeptide onto the lipid carrier undecaprenyl phosphate, yielding undecaprenyl-pyrophosphoryl-MurNAc-pentapeptide, known as lipid I. The protein is Phospho-N-acetylmuramoyl-pentapeptide-transferase of Desulfatibacillum aliphaticivorans.